The following is a 459-amino-acid chain: Exodeoxyribonuclease 7 large subunit (459 aa).

Belongs to the XseA family. Heterooligomer composed of large and small subunits.

The protein resides in the cytoplasm. The catalysed reaction is Exonucleolytic cleavage in either 5'- to 3'- or 3'- to 5'-direction to yield nucleoside 5'-phosphates.. Bidirectionally degrades single-stranded DNA into large acid-insoluble oligonucleotides, which are then degraded further into small acid-soluble oligonucleotides. The chain is Exodeoxyribonuclease 7 large subunit from Yersinia pseudotuberculosis serotype O:3 (strain YPIII).